Consider the following 186-residue polypeptide: Pyridoxal 5'-phosphate synthase subunit PdxT (186 aa).

46–48 is an L-glutamine binding site; sequence GES. The active-site Nucleophile is the cysteine 75. L-glutamine is bound by residues arginine 101 and 128 to 129; that span reads IR. Catalysis depends on charge relay system residues histidine 165 and glutamate 167.

Belongs to the glutaminase PdxT/SNO family. In terms of assembly, in the presence of PdxS, forms a dodecamer of heterodimers. Only shows activity in the heterodimer.

The enzyme catalyses aldehydo-D-ribose 5-phosphate + D-glyceraldehyde 3-phosphate + L-glutamine = pyridoxal 5'-phosphate + L-glutamate + phosphate + 3 H2O + H(+). The catalysed reaction is L-glutamine + H2O = L-glutamate + NH4(+). It functions in the pathway cofactor biosynthesis; pyridoxal 5'-phosphate biosynthesis. Its function is as follows. Catalyzes the hydrolysis of glutamine to glutamate and ammonia as part of the biosynthesis of pyridoxal 5'-phosphate. The resulting ammonia molecule is channeled to the active site of PdxS. This chain is Pyridoxal 5'-phosphate synthase subunit PdxT, found in Methanocaldococcus jannaschii (strain ATCC 43067 / DSM 2661 / JAL-1 / JCM 10045 / NBRC 100440) (Methanococcus jannaschii).